Here is a 98-residue protein sequence, read N- to C-terminus: UPF0213 protein BPUM_0019 (98 aa).

The region spanning 4 to 79 is the GIY-YIG domain; that stretch reads HNHYFYVLKC…KTWTRKKKDL (76 aa).

The protein belongs to the UPF0213 family.

This is UPF0213 protein BPUM_0019 from Bacillus pumilus (strain SAFR-032).